The following is a 65-amino-acid chain: Large ribosomal subunit protein bL31 (65 aa).

Residues Cys-16, Cys-18, Cys-36, and Cys-39 each contribute to the Zn(2+) site.

It belongs to the bacterial ribosomal protein bL31 family. Type A subfamily. In terms of assembly, part of the 50S ribosomal subunit. The cofactor is Zn(2+).

Its function is as follows. Binds the 23S rRNA. This chain is Large ribosomal subunit protein bL31, found in Campylobacter jejuni subsp. doylei (strain ATCC BAA-1458 / RM4099 / 269.97).